A 178-amino-acid chain; its full sequence is UPF0215 protein STK_03040 (178 aa).

The protein belongs to the UPF0215 family.

The chain is UPF0215 protein STK_03040 from Sulfurisphaera tokodaii (strain DSM 16993 / JCM 10545 / NBRC 100140 / 7) (Sulfolobus tokodaii).